A 423-amino-acid chain; its full sequence is Putative UPF0496 protein 5 (423 aa).

The span at 1-14 shows a compositional bias: basic residues; that stretch reads MGNRHGIMRPRRLA. The disordered stretch occupies residues 1 to 37; the sequence is MGNRHGIMRPRRLASGRSAAEEEEDGEGEPGSYEAAC. Helical transmembrane passes span 224-244 and 247-267; these read IVFLTSFAALLVCSVVAAAIA and PVAAALAAAASMPVGSAGKWM.

It belongs to the UPF0496 family.

Its subcellular location is the membrane. The protein is Putative UPF0496 protein 5 of Oryza sativa subsp. japonica (Rice).